The primary structure comprises 1069 residues: Adenylate-forming reductase (1069 aa).

An adenylation (A) domain region spans residues 20 to 391 (HPEDPKAVKS…WKLRQDINYR (372 aa)). AMP contacts are provided by residues His-262, 357-358 (AH), Thr-362, and 437-440 (AVGR). The Carrier domain maps to 576–656 (DSLEEDLKDL…KLGASLRHLA (81 aa)). Ser-612 is modified (O-(pantetheine 4'-phosphoryl)serine). Residues 686-1032 (TVLLTGSTGN…TGKVILDTSR (347 aa)) are reductase (R) domain. Residues 693-696 (TGNL), Arg-719, 785-787 (NAW), Tyr-863, and Lys-867 each bind NADP(+).

It belongs to the adenylate-forming reductase family.

The enzyme catalyses 5-methylorsellinate + ATP + NADPH + H(+) = 2,4-dihydroxy 5,6-dimethylbenzaldehyde + AMP + diphosphate + NADP(+). It participates in secondary metabolite biosynthesis. Its function is as follows. Non-canonical non-ribosomal peptide synthetase; part of the cluster A that mediates the biosynthesis of azasperpyranones, members of the azaphilone family that exhibit anti-cancer activities. Azasperpyranones are synthesized by 2 clusters, A and B. Cluster A is responsible for the production of the polyhydric phenol moiety while the azaphilonoid scaffold is produced by the cluster B. The non-reducing polyketide synthase ATEG_03629 produces 5-methyl orsellinic acid, which is then reduced to 5-methyl orsellinic aldehyde by the NRPS-like protein ATEG_03630. 5-methyl orsellinic aldehyde is then first hydroxylated by the FAD-dependent monooxygenase ATEG_03635 and subsequently hydroxylated by the cytochrome P450 monooxygenase ATEG_03631 to produce the unstable polyhydric phenol precursor of azasperpyranones. On the other hand, the polyketide synthase ATEG_07659 is responsible for producing the 3,5-dimethyloctadienone moiety from acetyl-CoA, three malonyl-CoA, and two S-adenosyl methionines (SAM). The 3,5-dimethyloctadienone moiety is then loaded onto the SAT domain of ATEG_07661 and extended with four malonyl-CoA and one SAM, which leads to the formation of 2,4-dihydroxy-6-(5,7-dimethyl-2-oxo-trans-3-trans-5-nonadienyl)-3-methylbenzaldehyde (compound 8) after reductive release and aldol condensation. The FAD-dependent monooxygenase ATEG_07662 is the next enzyme in the biosynthesis sequence and hydroxylates the side chain at the benzylic position of compound 8. In Aspergillus nidulans, afoF, the ortholog of the FAD-dependent oxygenase ATEG_07660, is the key enzyme for the biosynthesis of asperfuranone by catalyzing the hydroxylation at C-8 of to prevent the formation of a six-membered ring hemiacetal intermediate and thus facilitating the formation of a five-membered ring to produce asperfuranone. In Aspergillus terreus, ATEG_07660 is probably not functional, which leads to the formation of the six-membered ring hemiacetal intermediate presperpyranone instead of asperfuranone. Finally, ATEG_03636 is involved in the condensation of the polyhydric phenol moiety produced by cluster A and the perasperpyranone precursor produced by cluster B, to yield azasperpyranone A. Further modifications of azasperpyranone A result in the production of derivatives, including azasperpyranone B to F. This Aspergillus terreus (strain NIH 2624 / FGSC A1156) protein is Adenylate-forming reductase.